A 245-amino-acid polypeptide reads, in one-letter code: Ribonuclease 3 (245 aa).

Residues 17–146 form the RNase III domain; it reads FTDKMKSLGL…FVGALYLDQG (130 aa). Position 59 (Glu-59) interacts with Mg(2+). Asp-63 is an active-site residue. Mg(2+) is bound by residues Asp-132 and Glu-135. The active site involves Glu-135. A DRBM domain is found at 172-241; sequence DFKTQFQEYV…AEQAYKLMKN (70 aa).

Belongs to the ribonuclease III family. As to quaternary structure, homodimer. It depends on Mg(2+) as a cofactor.

It localises to the cytoplasm. The enzyme catalyses Endonucleolytic cleavage to 5'-phosphomonoester.. Functionally, digests double-stranded RNA. Involved in the processing of primary rRNA transcript to yield the immediate precursors to the large and small rRNAs (23S and 16S). Processes some mRNAs, and tRNAs when they are encoded in the rRNA operon. Processes pre-crRNA and tracrRNA of type II CRISPR loci if present in the organism. The chain is Ribonuclease 3 from Staphylococcus epidermidis (strain ATCC 12228 / FDA PCI 1200).